Consider the following 488-residue polypeptide: Glutamyl-tRNA(Gln) amidotransferase subunit A (488 aa).

Residues lysine 77 and serine 152 each act as charge relay system in the active site. The active-site Acyl-ester intermediate is serine 176.

The protein belongs to the amidase family. GatA subfamily. As to quaternary structure, heterotrimer of A, B and C subunits.

It catalyses the reaction L-glutamyl-tRNA(Gln) + L-glutamine + ATP + H2O = L-glutaminyl-tRNA(Gln) + L-glutamate + ADP + phosphate + H(+). Allows the formation of correctly charged Gln-tRNA(Gln) through the transamidation of misacylated Glu-tRNA(Gln) in organisms which lack glutaminyl-tRNA synthetase. The reaction takes place in the presence of glutamine and ATP through an activated gamma-phospho-Glu-tRNA(Gln). The protein is Glutamyl-tRNA(Gln) amidotransferase subunit A of Streptococcus agalactiae serotype III (strain NEM316).